A 314-amino-acid chain; its full sequence is Vacuolar membrane protein SCRG_03194 (314 aa).

A disordered region spans residues 32-60 (KPTSSVVSETSSKSLPSLTSSAFSTSSGA). Residues 93-113 (VYIAVGAVIGAIFISILIWWL) form a helical membrane-spanning segment. Phosphoserine is present on residues S148, S254, and S274. The segment at 240–309 (EERKLNLNRP…PSMFLDDVLN (70 aa)) is disordered. Basic and acidic residues predominate over residues 254-269 (SPERKEKKINSMEGYH).

It belongs to the PRM5 family.

The protein resides in the vacuole membrane. The polypeptide is Vacuolar membrane protein SCRG_03194 (Saccharomyces cerevisiae (strain RM11-1a) (Baker's yeast)).